Reading from the N-terminus, the 328-residue chain is Cell division protein ZipA (328 aa).

The Periplasmic portion of the chain corresponds to 1–4; that stretch reads MDLN. Residues 5–25 form a helical membrane-spanning segment; it reads TILIIVGIVALVALIVHGLWS. At 26–328 the chain is on the cytoplasmic side; it reads NRREKSKYFD…NAEQAYLARV (303 aa). The disordered stretch occupies residues 43-82; sequence TSLTSRSHTQEEMAQPNNISPNTYVENGHTPIPQPTTEKV. The segment covering 57-67 has biased composition (polar residues); that stretch reads QPNNISPNTYV.

The protein belongs to the ZipA family. As to quaternary structure, interacts with FtsZ via their C-terminal domains.

It localises to the cell inner membrane. Functionally, essential cell division protein that stabilizes the FtsZ protofilaments by cross-linking them and that serves as a cytoplasmic membrane anchor for the Z ring. Also required for the recruitment to the septal ring of downstream cell division proteins. In Haemophilus influenzae (strain PittEE), this protein is Cell division protein ZipA.